The following is a 219-amino-acid chain: 7-cyano-7-deazaguanine synthase (219 aa).

8–18 (LSGGMDSAVLL) serves as a coordination point for ATP. Positions 185, 193, 196, and 199 each coordinate Zn(2+).

It belongs to the QueC family. Zn(2+) is required as a cofactor.

The catalysed reaction is 7-carboxy-7-deazaguanine + NH4(+) + ATP = 7-cyano-7-deazaguanine + ADP + phosphate + H2O + H(+). The protein operates within purine metabolism; 7-cyano-7-deazaguanine biosynthesis. Catalyzes the ATP-dependent conversion of 7-carboxy-7-deazaguanine (CDG) to 7-cyano-7-deazaguanine (preQ(0)). The protein is 7-cyano-7-deazaguanine synthase of Desulfotalea psychrophila (strain LSv54 / DSM 12343).